Reading from the N-terminus, the 802-residue chain is E3 ubiquitin-protein ligase RNF10 (802 aa).

Low complexity-rich tracts occupy residues 1 to 31, 78 to 90, and 104 to 113; these read MPQS…SGSS, SNQS…QKSK, and SKPFSSSSNG. The interval 1–134 is disordered; sequence MPQSSPSTAA…AEFSPAQFSG (134 aa). Phosphoserine is present on S5. S110 is subject to Phosphoserine. Positions 114 to 124 are enriched in basic and acidic residues; it reads GRRDEVAEAQR. At S128 the chain carries Phosphoserine. The segment at 225–267 adopts an RING-type zinc-finger fold; it reads CPICLYPPTAAKITRCGHIFCWACILHYLSLSERTWSKCPICY. Residues 645–654 show a composition bias toward polar residues; that stretch reads DSALGPTSTE. Disordered stretches follow at residues 645–664, 716–753, and 767–802; these read DSAL…LSPL, DGWP…VPSF, and KLDT…VHTK. Over residues 716–728 the composition is skewed to basic and acidic residues; sequence DGWPKAAPKKDDN. The segment covering 793–802 has biased composition (polar residues); that stretch reads LFSTSVVHTK.

It belongs to the RNF10 family. Interacts with MEOX2.

It is found in the cytoplasm. Its subcellular location is the nucleus. The catalysed reaction is S-ubiquitinyl-[E2 ubiquitin-conjugating enzyme]-L-cysteine + [acceptor protein]-L-lysine = [E2 ubiquitin-conjugating enzyme]-L-cysteine + N(6)-ubiquitinyl-[acceptor protein]-L-lysine.. Its pathway is protein modification; protein ubiquitination. Its function is as follows. E3 ubiquitin-protein ligase that catalyzes monoubiquitination of 40S ribosomal proteins RPS2/us5 and RPS3/us3 in response to ribosome stalling. Part of a ribosome quality control that takes place when ribosomes have stalled during translation initiation (iRQC): RNF10 acts by mediating monoubiquitination of RPS2/us5 and RPS3/us3, promoting their degradation by the proteasome. Also promotes ubiquitination of 40S ribosomal proteins in response to ribosome stalling during translation elongation. The action of RNF10 in iRQC is counteracted by USP10. May also act as a transcriptional factor involved in the regulation of MAG (Myelin-associated glycoprotein) expression. Acts as a regulator of Schwann cell differentiation and myelination. The sequence is that of E3 ubiquitin-protein ligase RNF10 from Rattus norvegicus (Rat).